A 96-amino-acid polypeptide reads, in one-letter code: Phosphoribosyl-ATP pyrophosphatase (96 aa).

This sequence belongs to the PRA-PH family.

Its subcellular location is the cytoplasm. The enzyme catalyses 1-(5-phospho-beta-D-ribosyl)-ATP + H2O = 1-(5-phospho-beta-D-ribosyl)-5'-AMP + diphosphate + H(+). It participates in amino-acid biosynthesis; L-histidine biosynthesis; L-histidine from 5-phospho-alpha-D-ribose 1-diphosphate: step 2/9. The polypeptide is Phosphoribosyl-ATP pyrophosphatase (Methanococcus vannielii (strain ATCC 35089 / DSM 1224 / JCM 13029 / OCM 148 / SB)).